A 368-amino-acid polypeptide reads, in one-letter code: Quinolinate synthase (368 aa).

Residues histidine 46 and serine 63 each contribute to the iminosuccinate site. Cysteine 110 serves as a coordination point for [4Fe-4S] cluster. Iminosuccinate contacts are provided by residues 141–143 and serine 162; that span reads YVN. Cysteine 230 is a [4Fe-4S] cluster binding site. Residues 256 to 258 and threonine 273 contribute to the iminosuccinate site; that span reads HPE. Cysteine 320 serves as a coordination point for [4Fe-4S] cluster.

This sequence belongs to the quinolinate synthase family. Type 3 subfamily. [4Fe-4S] cluster serves as cofactor.

It localises to the cytoplasm. It catalyses the reaction iminosuccinate + dihydroxyacetone phosphate = quinolinate + phosphate + 2 H2O + H(+). It functions in the pathway cofactor biosynthesis; NAD(+) biosynthesis; quinolinate from iminoaspartate: step 1/1. Its function is as follows. Catalyzes the condensation of iminoaspartate with dihydroxyacetone phosphate to form quinolinate. This chain is Quinolinate synthase, found in Bacillus anthracis (strain A0248).